The following is a 176-amino-acid chain: I-Kappa-B like protein G1 (176 aa).

ANK repeat units follow at residues 56 to 88, 93 to 123, and 127 to 156; these read EGRQCTHIAAEYDVSNAVMKIELLVMLGADINS, FGNTLLHIAAGTENYQLAEWLCKKPGVELGA, and LYKTAYHIAYERQNARMMEILRVNGAVCDD.

Belongs to the polydnaviridae I-Kappa-B-like protein family.

Its function is as follows. Suppresses the host immune response through NF-kappa-B inactivation. Possesses ankyrin repeat domains required for NF-kappa-B binding but lacks the regulatory regions required for dissociation from NF-kappa-B and degradation. Therefore, prevents host NF-kappa-B release and subsequent activation. The protein is I-Kappa-B like protein G1 (G3) of Microplitis demolitor (Parasitoid wasp).